Here is a 1203-residue protein sequence, read N- to C-terminus: ATP-dependent helicase/nuclease subunit A (1203 aa).

Residues 4-472 (VKLTPEQNEA…IRLKENFRSR (469 aa)) form the UvrD-like helicase ATP-binding domain. 25–32 (ASAGSGKT) contributes to the ATP binding site. The region spanning 503 to 785 (VQGNISDYPV…RVMTFHKSKG (283 aa)) is the UvrD-like helicase C-terminal domain.

This sequence belongs to the helicase family. AddA subfamily. Heterodimer of AddA and AddB/RexB. It depends on Mg(2+) as a cofactor.

It carries out the reaction Couples ATP hydrolysis with the unwinding of duplex DNA by translocating in the 3'-5' direction.. The enzyme catalyses ATP + H2O = ADP + phosphate + H(+). In terms of biological role, the heterodimer acts as both an ATP-dependent DNA helicase and an ATP-dependent, dual-direction single-stranded exonuclease. Recognizes the chi site generating a DNA molecule suitable for the initiation of homologous recombination. The AddA nuclease domain is required for chi fragment generation; this subunit has the helicase and 3' -&gt; 5' nuclease activities. In Lactococcus lactis subsp. cremoris (strain SK11), this protein is ATP-dependent helicase/nuclease subunit A.